The following is a 526-amino-acid chain: MDIKNSPSNLNSPVSYNCSQSVLPLEPGPIYIPSSYVESCHEYSAMTFYSPAVVNYSISSNSEVGPGRQATSPNVLWPTPGHLSPLAIHCQPSLLYAEPQKSPWCDTRSLEHTLPVNRETLKRKASGSSCASPVTSPSSKRDAHFCAVCSDYASGYHYGVWSCEGCKAFFKRSIQGHNDYICPATNQCTIDKNRRKSCQACRLRKCYEVGMVKCGSRRERCGYRIVRKQRNSEGHLHCLSRAKKNGDHTTRVKELLLSTLSPEQLVLTLLEAEPPHVLVSRPSTPFTEASMMMSLTKLADKELVHMISWAKKIPGFMELSLYDQVRLLESCWLEVLMVGLMWRSIDHPGKLIFAPDLVLDRDEGKCVEGILEIFDMLLATTSRFRELKLQHKEYLCVKAMILLNSSMYPSAAAQEAESSRKLTHLLNAVTDALVWVIARSGISSQQQSVRLANLLMLLSHVRHASNKGTEHLLNMKCKNVVPVYDLLLEMLNAHTLRGNKSLVTGSERSRMEESESKEGSQKPQAQ.

Positions 1 to 145 are modulating; the sequence is MDIKNSPSNL…SPSSKRDAHF (145 aa). Phosphoserine; by MAPK occurs at positions 84 and 102. 2 consecutive NR C4-type zinc fingers follow at residues 146 to 166 and 182 to 206; these read CAVC…CEGC and CPAT…LRKC. A DNA-binding region (nuclear receptor) is located at residues 146–211; the sequence is CAVCSDYASG…RLRKCYEVGM (66 aa). Positions 261–494 constitute an NR LBD domain; that stretch reads SPEQLVLTLL…DLLLEMLNAH (234 aa). The interval 502-526 is disordered; sequence LVTGSERSRMEESESKEGSQKPQAQ. A compositionally biased stretch (basic and acidic residues) spans 507 to 520; the sequence is ERSRMEESESKEGS.

Belongs to the nuclear hormone receptor family. NR3 subfamily. Binds DNA as a homodimer. Can form a heterodimer with ESR1. Interacts with NCOA1, NCOA3, NCOA5 and NCOA6 coactivators, leading to a strong increase of transcription of target genes. Interacts with UBE1C and AKAP13. Interacts with DNTTIP2. Interacts with CCDC62 in the presence of estradiol/E2; this interaction seems to enhance the transcription of target genes. Interacts with DNAAF4. Interacts with PRMT2. Interacts with CCAR2 (via N-terminus) in a ligand-independent manner. Interacts with RBM39, in the presence of estradiol (E2). Interacts with STUB1/CHIP. Phosphorylation at Ser-84 and Ser-102 recruits NCOA1.

Its subcellular location is the nucleus. Its function is as follows. Nuclear hormone receptor. Binds estrogens with an affinity similar to that of ESR1/ER-alpha, and activates expression of reporter genes containing estrogen response elements (ERE) in an estrogen-dependent manner. The protein is Estrogen receptor beta (ESR2) of Sus scrofa (Pig).